The primary structure comprises 117 residues: Prefoldin subunit beta (117 aa).

Belongs to the prefoldin subunit beta family. As to quaternary structure, heterohexamer of two alpha and four beta subunits.

It localises to the cytoplasm. Functionally, molecular chaperone capable of stabilizing a range of proteins. Seems to fulfill an ATP-independent, HSP70-like function in archaeal de novo protein folding. This is Prefoldin subunit beta from Methanosarcina mazei (strain ATCC BAA-159 / DSM 3647 / Goe1 / Go1 / JCM 11833 / OCM 88) (Methanosarcina frisia).